The chain runs to 618 residues: Leucine aminopeptidase 2 (618 aa).

A peptide-binding positions include 140–142 (QCQ) and 272–277 (PYGGME). His-301 serves as a coordination point for Zn(2+). The Proton acceptor role is filled by Glu-302. Zn(2+) is bound by residues His-305 and Glu-324. Tyr-389 acts as the Proton donor in catalysis.

This sequence belongs to the peptidase M1 family. Zn(2+) is required as a cofactor.

The protein resides in the cytoplasm. The protein localises to the nucleus. It carries out the reaction an epoxide + H2O = an ethanediol. Its function is as follows. Aminopeptidase that preferentially cleaves di- and tripeptides. Also has low epoxide hydrolase activity (in vitro). Can hydrolyze the epoxide leukotriene LTA(4) but it forms preferentially 5,6-dihydroxy-7,9,11,14-eicosatetraenoic acid rather than the cytokine leukotriene B(4) as the product compared to the homologous mammalian enzyme (in vitro). This Emericella nidulans (strain FGSC A4 / ATCC 38163 / CBS 112.46 / NRRL 194 / M139) (Aspergillus nidulans) protein is Leucine aminopeptidase 2.